A 125-amino-acid chain; its full sequence is uncharacterized protein (125 aa).

It is found in the plastid. This is an uncharacterized protein from Euglena longa (Euglenophycean alga).